The primary structure comprises 453 residues: Ankyrin repeat and SOCS box protein 16 (453 aa).

7 ANK repeats span residues Cys56–Met85, Lys110–Ala139, Gly142–Val171, Glu175–Val204, Ser209–Leu238, Gln242–Ala279, and Lys283–Val312. The SOCS box domain occupies Phe397–Gln453.

The protein belongs to the ankyrin SOCS box (ASB) family.

The protein operates within protein modification; protein ubiquitination. In terms of biological role, may be a substrate-recognition component of a SCF-like ECS (Elongin-Cullin-SOCS-box protein) E3 ubiquitin-protein ligase complex which mediates the ubiquitination and subsequent proteasomal degradation of target proteins. In Mus musculus (Mouse), this protein is Ankyrin repeat and SOCS box protein 16 (Asb16).